Here is an 803-residue protein sequence, read N- to C-terminus: Leucine--tRNA ligase (803 aa).

The 'HIGH' region motif lies at 40 to 51; the sequence is PYPSGAGLHVGH. Residues 575-579 carry the 'KMSKS' region motif; it reads KMSKS. An ATP-binding site is contributed by lysine 578.

Belongs to the class-I aminoacyl-tRNA synthetase family.

The protein resides in the cytoplasm. It catalyses the reaction tRNA(Leu) + L-leucine + ATP = L-leucyl-tRNA(Leu) + AMP + diphosphate. In Listeria monocytogenes serotype 4a (strain HCC23), this protein is Leucine--tRNA ligase.